Reading from the N-terminus, the 120-residue chain is Large ribosomal subunit protein uL18 (120 aa).

It belongs to the universal ribosomal protein uL18 family. As to quaternary structure, part of the 50S ribosomal subunit; part of the 5S rRNA/L5/L18 subcomplex. In B.stearothermophilus only 2 proteins, L5 and L18 have been shown to be part of this subcomplex, unlike the case in E.coli and T.thermophilus where L25 (TL5) is also found. In terms of processing, the protein, when overexpressed in E.coli, contains a phosphoserine, which is required for the protein to bind to 5S rRNA. It has been suggested, based solely on amino acid conservation, that this occurs on Ser-57.

Functionally, this is one of the proteins that bind and probably mediate the attachment of the 5S RNA into the large ribosomal subunit, where it forms part of the central protuberance. The protein is Large ribosomal subunit protein uL18 (rplR) of Geobacillus stearothermophilus (Bacillus stearothermophilus).